Here is a 388-residue protein sequence, read N- to C-terminus: Succinate--CoA ligase [ADP-forming] subunit beta (388 aa).

In terms of domain architecture, ATP-grasp spans 9–244; it reads KQLFARYGLP…QSQEDPREAQ (236 aa). Residues Lys46, 53–55, Glu99, Thr102, and Glu107 each bind ATP; that span reads GRG. Mg(2+) is bound by residues Asn199 and Asp213. Substrate is bound by residues Asn264 and 321-323; that span reads GIV.

This sequence belongs to the succinate/malate CoA ligase beta subunit family. In terms of assembly, heterotetramer of two alpha and two beta subunits. It depends on Mg(2+) as a cofactor.

It carries out the reaction succinate + ATP + CoA = succinyl-CoA + ADP + phosphate. The enzyme catalyses GTP + succinate + CoA = succinyl-CoA + GDP + phosphate. It functions in the pathway carbohydrate metabolism; tricarboxylic acid cycle; succinate from succinyl-CoA (ligase route): step 1/1. Succinyl-CoA synthetase functions in the citric acid cycle (TCA), coupling the hydrolysis of succinyl-CoA to the synthesis of either ATP or GTP and thus represents the only step of substrate-level phosphorylation in the TCA. The beta subunit provides nucleotide specificity of the enzyme and binds the substrate succinate, while the binding sites for coenzyme A and phosphate are found in the alpha subunit. The sequence is that of Succinate--CoA ligase [ADP-forming] subunit beta from Escherichia coli O8 (strain IAI1).